Reading from the N-terminus, the 429-residue chain is High mobility group nucleosome-binding domain-containing protein 5 (429 aa).

The interval Met-1 to Val-429 is disordered. The residue at position 29 (Thr-29) is a Phosphothreonine. Positions Lys-35–Lys-44 are enriched in basic residues. Lys-64 participates in a covalent cross-link: Glycyl lysine isopeptide (Lys-Gly) (interchain with G-Cter in SUMO2). Position 90 is a phosphoserine (Ser-90). Basic and acidic residues-rich tracts occupy residues Met-92–Ile-101 and Gly-109–Glu-124. Lys-98 participates in a covalent cross-link: Glycyl lysine isopeptide (Lys-Gly) (interchain with G-Cter in SUMO1); alternate. Lys-98 is covalently cross-linked (Glycyl lysine isopeptide (Lys-Gly) (interchain with G-Cter in SUMO2); alternate). Lys-121 is covalently cross-linked (Glycyl lysine isopeptide (Lys-Gly) (interchain with G-Cter in SUMO2)). Over residues Glu-133 to Glu-152 the composition is skewed to acidic residues. Basic and acidic residues predominate over residues Arg-153–Glu-195. The span at Glu-196–Val-209 shows a compositional bias: acidic residues. Composition is skewed to basic and acidic residues over residues Lys-210–Arg-387 and Asn-413–Val-429.

Belongs to the HMGN family. As to expression, expressed in trophoblast giant cells.

The protein localises to the nucleus. Preferentially binds to euchromatin and modulates cellular transcription by counteracting linker histone-mediated chromatin compaction. The protein is High mobility group nucleosome-binding domain-containing protein 5 of Rattus norvegicus (Rat).